A 93-amino-acid polypeptide reads, in one-letter code: Large ribosomal subunit protein uL23cz/uL23cy (93 aa).

Belongs to the universal ribosomal protein uL23 family. As to quaternary structure, part of the 50S ribosomal subunit.

It localises to the plastid. Its subcellular location is the chloroplast. Functionally, binds to 23S rRNA. The protein is Large ribosomal subunit protein uL23cz/uL23cy (rpl23-A) of Drimys granadensis.